Consider the following 289-residue polypeptide: GTPase Era (289 aa).

An Era-type G domain is found at 2-167; that stretch reads KSGFVSIIGR…LDEICKLLPE (166 aa). The tract at residues 10 to 17 is G1; it reads GRTNAGKS. GTP is bound at residue 10–17; the sequence is GRTNAGKS. The segment at 36-40 is G2; that stretch reads NATRR. The tract at residues 57 to 60 is G3; it reads DTPG. GTP contacts are provided by residues 57–61 and 116–119; these read DTPGL and TKVD. The interval 116 to 119 is G4; that stretch reads TKVD. The G5 stretch occupies residues 146–148; the sequence is FST. The region spanning 194–274 is the KH type-2 domain; sequence IYENLSDEIP…FLKLDVVVKK (81 aa).

The protein belongs to the TRAFAC class TrmE-Era-EngA-EngB-Septin-like GTPase superfamily. Era GTPase family. Monomer.

It localises to the cytoplasm. The protein localises to the cell inner membrane. Functionally, an essential GTPase that binds both GDP and GTP, with rapid nucleotide exchange. Plays a role in 16S rRNA processing and 30S ribosomal subunit biogenesis and possibly also in cell cycle regulation and energy metabolism. This chain is GTPase Era, found in Campylobacter concisus (strain 13826).